Here is a 179-residue protein sequence, read N- to C-terminus: NADH-quinone oxidoreductase subunit B (179 aa).

Residues Cys-52, Cys-53, Cys-117, and Cys-147 each coordinate [4Fe-4S] cluster.

It belongs to the complex I 20 kDa subunit family. In terms of assembly, NDH-1 is composed of 14 different subunits. Subunits NuoB, C, D, E, F, and G constitute the peripheral sector of the complex. [4Fe-4S] cluster serves as cofactor.

The protein localises to the cell inner membrane. The enzyme catalyses a quinone + NADH + 5 H(+)(in) = a quinol + NAD(+) + 4 H(+)(out). NDH-1 shuttles electrons from NADH, via FMN and iron-sulfur (Fe-S) centers, to quinones in the respiratory chain. The immediate electron acceptor for the enzyme in this species is believed to be ubiquinone. Couples the redox reaction to proton translocation (for every two electrons transferred, four hydrogen ions are translocated across the cytoplasmic membrane), and thus conserves the redox energy in a proton gradient. The protein is NADH-quinone oxidoreductase subunit B of Ehrlichia chaffeensis (strain ATCC CRL-10679 / Arkansas).